Here is a 483-residue protein sequence, read N- to C-terminus: Endoplasmic reticulum lectin 1 (483 aa).

The N-terminal stretch at 1–33 (MEEGGGGVRSLVPGGPVLLVLCGLLEASGGGRA) is a signal peptide. 2 MRH domains span residues 111–246 (SSCS…LCSH) and 342–469 (SYCF…ICKI). A disulfide bridge connects residues cysteine 113 and cysteine 126. N-linked (GlcNAc...) asparagine glycosylation is present at asparagine 195. 5 disulfides stabilise this stretch: cysteine 199–cysteine 232, cysteine 215–cysteine 244, cysteine 344–cysteine 357, cysteine 421–cysteine 455, and cysteine 436–cysteine 467.

As to quaternary structure, may form a complex with OS9, HSPA5, SYVN1, and SEL1L with which it interacts directly. Interacts (via PRKCSH 2 domain) with KREMEN2 (when glycosylated). Interacts with HSPA5. Isoform 1 and isoform 2 are N-glycosylated.

The protein resides in the endoplasmic reticulum lumen. Functionally, probable lectin that binds selectively to improperly folded lumenal proteins. May function in endoplasmic reticulum quality control and endoplasmic reticulum-associated degradation (ERAD) of both non-glycosylated proteins and glycoproteins. The sequence is that of Endoplasmic reticulum lectin 1 (ERLEC1) from Homo sapiens (Human).